Here is an 869-residue protein sequence, read N- to C-terminus: Probable inorganic carbon transporter subunit DabA (869 aa).

Residues 1-32 (MSTATLEQRAKRGEAPRANDAGHCAHPADGAR) are disordered. A compositionally biased stretch (basic and acidic residues) spans 8 to 17 (QRAKRGEAPR). The Zn(2+) site is built by Cys-376, Asp-378, His-555, and Cys-570.

The protein belongs to the inorganic carbon transporter (TC 9.A.2) DabA family. In terms of assembly, forms a complex with DabB. The cofactor is Zn(2+).

It localises to the cell inner membrane. Part of an energy-coupled inorganic carbon pump. The sequence is that of Probable inorganic carbon transporter subunit DabA from Burkholderia multivorans (strain ATCC 17616 / 249).